Here is a 518-residue protein sequence, read N- to C-terminus: Probable triacylglyceride transporter BCG_1471c (518 aa).

A run of 14 helical transmembrane segments spans residues 7-27 (VAIS…YVVV), 46-66 (RITW…PLLG), 76-96 (LMLQ…ALAG), 110-130 (IQGV…ADLW), 144-164 (AAQE…VWLL), 170-190 (VFWI…FSLP), 201-221 (VDLV…IGLY), 230-250 (VLPD…VAFF), 270-290 (PFLS…VTLV), 308-328 (AGML…GGWI), 337-357 (VAFA…HWPV), 379-401 (LVVA…LRVV), 408-428 (IASA…VAAL), and 475-495 (IFTI…LISG).

The protein belongs to the major facilitator superfamily.

The protein localises to the cell inner membrane. Its activity is regulated as follows. Inhibited by CCCP and valinomycin. In terms of biological role, in association with lipoprotein LprG probably transports triacylglycerides (TAG) across the inner cell membrane into the periplasm; TAG probably regulates lipid metabolism and growth regulation. Confers resistance to several drugs such as rifampicin, clofazimine and novobiocin; is also part of the oxidative stress response and is needed to maintain normal growth characteristics. Probably an efflux transporter, involved in maintaining correct cell wall permeability. Probably required with LprG for normal surface localization of lipoarabinomannan (LAM). Required for optimal growth on cholesterol. This is Probable triacylglyceride transporter BCG_1471c from Mycobacterium bovis (strain BCG / Pasteur 1173P2).